The following is a 358-amino-acid chain: CX3C chemokine receptor 1 (358 aa).

The Extracellular segment spans residues 1-26 (MHTTLPESTSENFEYYDLAEACDMGD). A helical membrane pass occupies residues 27-47 (IVALGTVFVVILYSLVFAFGL). At 48 to 68 (VGNLLVVFALINSQRSKSITD) the chain is on the cytoplasmic side. The chain crosses the membrane as a helical span at residues 69 to 89 (IYLLNLALSDLLFVATLPFWT). Residues 90–105 (HYVINEQGLHHATCKL) lie on the Extracellular side of the membrane. C103 and C176 form a disulfide bridge. The chain crosses the membrane as a helical span at residues 106–126 (ITAFFFIGFFGGIFFITVISV). Topologically, residues 127-147 (DRFLAIVLAANSMSNRTVQHG) are cytoplasmic. Residues 148–168 (VTTSLGVWAAAILVATPQFMF) form a helical membrane-spanning segment. Residues 169–186 (TREKENECFGDYPEILQE) are Extracellular-facing. A helical membrane pass occupies residues 187 to 207 (IWPVILNTEINFLGFLLPLLI). Residues 208 to 232 (MSYCYFRIMQTLFSCKNHKKAKAIR) are Cytoplasmic-facing. The helical transmembrane segment at 233 to 253 (LIFLVVVVFFLFWTPYNVMIF) threads the bilayer. The Extracellular portion of the chain corresponds to 254–275 (LQTLNLYDFFPKCDVKRDLKLA). A helical transmembrane segment spans residues 276 to 296 (ISVTETIAFSHCCLNPLIYAF). Residues 297-358 (AGEKFRRYLY…TSDGDASILL (62 aa)) are Cytoplasmic-facing. A Phosphothreonine modification is found at T349.

It belongs to the G-protein coupled receptor 1 family. Found in a ternary complex with CX3CL1 and ITGAV:ITGB3 or ITGA4:ITGB1. This protein is not N-glycosylated which is unusual for G-protein-coupled receptors.

The protein localises to the cell membrane. Receptor for the C-X3-C chemokine fractalkine (CX3CL1) present on many early leukocyte cells; CX3CR1-CX3CL1 signaling exerts distinct functions in different tissue compartments, such as immune response, inflammation, cell adhesion and chemotaxis. CX3CR1-CX3CL1 signaling mediates cell migratory functions. Responsible for the recruitment of natural killer (NK) cells to inflamed tissues. Acts as a regulator of inflammation process leading to atherogenesis by mediating macrophage and monocyte recruitment to inflamed atherosclerotic plaques, promoting cell survival. Involved in airway inflammation by promoting interleukin 2-producing T helper (Th2) cell survival in inflamed lung. Involved in the migration of circulating monocytes to non-inflamed tissues, where they differentiate into macrophages and dendritic cells. Acts as a negative regulator of angiogenesis, probably by promoting macrophage chemotaxis. Plays a key role in brain microglia by regulating inflammatory response in the central nervous system (CNS) and regulating synapse maturation. Required to restrain the microglial inflammatory response in the CNS and the resulting parenchymal damage in response to pathological stimuli. Involved in brain development by participating in synaptic pruning, a natural process during which brain microglia eliminates extra synapses during postnatal development. Synaptic pruning by microglia is required to promote the maturation of circuit connectivity during brain development. Acts as an important regulator of the gut microbiota by controlling immunity to intestinal bacteria and fungi. Expressed in lamina propria dendritic cells in the small intestine, which form transepithelial dendrites capable of taking up bacteria in order to provide defense against pathogenic bacteria. Required to initiate innate and adaptive immune responses against dissemination of commensal fungi (mycobiota) component of the gut: expressed in mononuclear phagocytes (MNPs) and acts by promoting induction of antifungal IgG antibodies response to confer protection against disseminated C.albicans or C.auris infection. Also acts as a receptor for C-C motif chemokine CCL26, inducing cell chemotaxis. This is CX3C chemokine receptor 1 from Bos taurus (Bovine).